The chain runs to 225 residues: Suppressor of cytokine signaling 3 (225 aa).

The segment at 22 to 33 is kinase inhibitory region (KIR); sequence LKTFSSKSEYQL. The segment at 34–45 is extended SH2 subdomain (ESS); that stretch reads VVNAVRKLQESG. In terms of domain architecture, SH2 spans 46–142; the sequence is FYWSAVTGGE…APSFSLPPTE (97 aa). Residues 141-160 form a disordered region; the sequence is TEPSFEVQEQPPAQALPGGT. An SOCS box domain is found at 177–224; the sequence is VLSRPLSSNVATLQHLCRKTVNGHLDSYEKVTQLPGPIREFLDQYDAP.

Interacts with multiple activated proteins of the tyrosine kinase signaling pathway including IGF1 receptor, insulin receptor and JAK2. Binding to JAK2 is mediated through the KIR and SH2 domains to a phosphorylated tyrosine residue within the JAK2 JH1 domain. Binds specific activated tyrosine residues of the leptin, EPO, IL12, GSCF and gp130 receptors. Interaction with CSNK1E stabilize SOCS3 protein. Component of the probable ECS(SOCS3) E3 ubiquitin-protein ligase complex which contains CUL5, RNF7/RBX2, Elongin BC complex and SOCS3. Interacts with CUL5, RNF7, ELOB and ELOC. Interacts with FGFR3. Interacts with INSR. Interacts with BCL10; this interaction may interfere with BCL10-binding with PELI2. Interacts with NOD2 (via CARD domain); the interaction promotes NOD2 degradation. In terms of processing, phosphorylated on tyrosine residues after stimulation by the cytokines, IL-2, EPO or IGF1.

Its pathway is protein modification; protein ubiquitination. Its function is as follows. SOCS family proteins form part of a classical negative feedback system that regulates cytokine signal transduction. SOCS3 is involved in negative regulation of cytokines that signal through the JAK/STAT pathway. Inhibits cytokine signal transduction by binding to tyrosine kinase receptors including IL6ST/gp130, LIF, erythropoietin, insulin, IL12, GCSF and leptin receptors. Binding to JAK2 inhibits its kinase activity and regulates IL6 signaling. Suppresses fetal liver erythropoiesis. Regulates onset and maintenance of allergic responses mediated by T-helper type 2 cells. Probable substrate recognition component of a SCF-like ECS (Elongin BC-CUL2/5-SOCS-box protein) E3 ubiquitin-protein ligase complex which mediates the ubiquitination and subsequent proteasomal degradation of target proteins. The chain is Suppressor of cytokine signaling 3 from Rattus norvegicus (Rat).